Here is a 193-residue protein sequence, read N- to C-terminus: Holliday junction branch migration complex subunit RuvA (193 aa).

Residues 1 to 64 (MIGRIAGTLI…EDAHLLYGFG (64 aa)) are domain I. The segment at 65–143 (TAAERETFRQ…ADLGTVPGGP (79 aa)) is domain II. A flexible linker region spans residues 144–151 (AVSDDAVD). The interval 151 to 193 (DVLNALLALGYSDKEAALAIKQVPAGTGVSEGIKLALKALSKG) is domain III.

It belongs to the RuvA family. Homotetramer. Forms an RuvA(8)-RuvB(12)-Holliday junction (HJ) complex. HJ DNA is sandwiched between 2 RuvA tetramers; dsDNA enters through RuvA and exits via RuvB. An RuvB hexamer assembles on each DNA strand where it exits the tetramer. Each RuvB hexamer is contacted by two RuvA subunits (via domain III) on 2 adjacent RuvB subunits; this complex drives branch migration. In the full resolvosome a probable DNA-RuvA(4)-RuvB(12)-RuvC(2) complex forms which resolves the HJ.

It is found in the cytoplasm. In terms of biological role, the RuvA-RuvB-RuvC complex processes Holliday junction (HJ) DNA during genetic recombination and DNA repair, while the RuvA-RuvB complex plays an important role in the rescue of blocked DNA replication forks via replication fork reversal (RFR). RuvA specifically binds to HJ cruciform DNA, conferring on it an open structure. The RuvB hexamer acts as an ATP-dependent pump, pulling dsDNA into and through the RuvAB complex. HJ branch migration allows RuvC to scan DNA until it finds its consensus sequence, where it cleaves and resolves the cruciform DNA. This is Holliday junction branch migration complex subunit RuvA from Ralstonia pickettii (strain 12J).